The primary structure comprises 481 residues: Endonuclease Bax1 (481 aa).

The interval 1–136 is N-terminal domain (NTD); it reads MLPWELARFS…EKKIIKAPTI (136 aa). Positions 158–250 are central domain (CRD); it reads YKLTVYVSSN…LKLANFKELK (93 aa). A nuclease domain (NUS) region spans residues 260–364; that stretch reads DSSVEEKFYK…YKRKIDISLV (105 aa). A divalent metal cation is bound by residues Glu-265, Asp-297, and Glu-310. The C-terminal domain (CTD) stretch occupies residues 414–481; that stretch reads PGYIFLKNYY…AIVIKDKKVN (68 aa).

Belongs to the Bax1 family. In terms of assembly, homodimer in solution, forms a heterodimer with XPB2. A divalent metal cation is required as a cofactor.

Functionally, a dual DNA endonuclease probably involved in nucleotide excision repair (NER). The N-terminal nuclease domain (NTD) of the XPB2-Bax1 complex cleaves on one side of a DNA bubble (which presumably mimics DNA damage), while the NUS nuclease domain cleaves the other side, respectively called 5' and 3' nuclease activities. Interaction with XPB blocks the NTD nuclease activity. Binds to and stimulates the ATPase activity (and probably also helicase activity) of XPB2. Increases affinity of XPB2 for forked DNA. Does not stimulate the DNA-dependent activity of XPB1. In an XPB2-Bax1-bubble DNA crystal (12 bp of dsDNA, a 6 base bubble and 6 bp of dsDNA) the short 6 bp arm is unwound. The 2 helicase and the ThM domains of XPB2 with the NTD and CRD domains of Bax1 encircle the DNA, forming a tunnel where the 12 bp dsDNA and the ds-ssDNA junction are located. The ThM domain is wedged between the ssDNA tails, with the 5' ssDNA contacting Bax1 and the 3' ssDNA in a channel in XPB2. The nuclease domain (NUS) of Bax1 does not contact DNA in the bubble DNA complex. The chain is Endonuclease Bax1 from Sulfurisphaera tokodaii (strain DSM 16993 / JCM 10545 / NBRC 100140 / 7) (Sulfolobus tokodaii).